Here is an 82-residue protein sequence, read N- to C-terminus: 4-(gamma-L-glutamylamino)butanoyl-[BtrI acyl-carrier protein] monooxygenase BtrO (82 aa).

Homotetramer.

The enzyme catalyses 4-(gamma-L-glutamylamino)butanoyl-[BtrI ACP] + FMNH2 + O2 = 4-(gamma-L-glutamylamino)-(2S)-2-hydroxybutanoyl-[BtrI ACP] + FMN + H2O + H(+). It participates in antibiotic biosynthesis; butirosin biosynthesis. Functionally, NAD(P)H:FMN oxidoreductase component of a two-component system involved in the biosynthesis of the side chain of the aminoglycoside antibiotics in the biosynthetic pathway of butirosin. Together with BtrO, mediates hydroxylation of gamma-L-Glu-GABA-S-BtrI. This Niallia circulans (Bacillus circulans) protein is 4-(gamma-L-glutamylamino)butanoyl-[BtrI acyl-carrier protein] monooxygenase BtrO (btrV).